Here is a 564-residue protein sequence, read N- to C-terminus: 4-hydroxybutyrate--CoA ligase 1 (564 aa).

The chain crosses the membrane as a helical span at residues 105-125 (VHPMHWAVFLAVIKGGFVMVP). ATP is bound by residues 204 to 212 (TSGTTGMPK), 343 to 348 (DFYGQT), Asp429, and Arg444. Position 348 (Thr348) interacts with substrate. 452–454 (SDY) is a binding site for CoA. Arg455 contributes to the substrate binding site. CoA contacts are provided by residues Arg484, Lys513, and 521–523 (VPR). Position 538 (Lys538) interacts with ATP.

Belongs to the ATP-dependent AMP-binding enzyme family. It depends on Mg(2+) as a cofactor. Requires Mn(2+) as cofactor.

Its subcellular location is the membrane. The enzyme catalyses 4-hydroxybutanoate + ATP + CoA = 4-hydroxybutanoyl-CoA + AMP + diphosphate. It catalyses the reaction acetate + ATP + CoA = acetyl-CoA + AMP + diphosphate. The catalysed reaction is propanoate + ATP + CoA = propanoyl-CoA + AMP + diphosphate. It carries out the reaction a medium-chain fatty acid + ATP + CoA = a medium-chain fatty acyl-CoA + AMP + diphosphate. Functionally, involved in the 3-hydroxypropionate/4-hydroxybutyrate cycle which incorporates carbon dioxide into cellular carbon. Catalyzes the ligation of coenzyme A (CoA) to 4-hydroxybutyrate (4HB). It can also use butyrate, valerate, propionate, acetate and 3-hydroxybutyrate (3HB) as substrates. The chain is 4-hydroxybutyrate--CoA ligase 1 from Metallosphaera sedula (strain ATCC 51363 / DSM 5348 / JCM 9185 / NBRC 15509 / TH2).